Consider the following 569-residue polypeptide: Protein Noxp20 (569 aa).

Disordered regions lie at residues 1 to 87, 102 to 126, and 165 to 208; these read MSDD…GEVT, GDTGSEIPLKEQDDAAVDPSSQAGR, and ANSA…GSRG. Thr197 bears the Phosphothreonine mark. A Phosphoserine modification is found at Ser262. Residues 404 to 439 are disordered; it reads VSIDVAKGSEEEEKEEGKEEKAEEPEEDKTGGQGAK.

The protein belongs to the FAM114 family. Over-expressed in brain. Also detected in lung, stomach, and in a lower extent in testis and thymus.

The protein localises to the cytoplasm. May play a role in neuronal cell development. This Mus musculus (Mouse) protein is Protein Noxp20 (Fam114a1).